The primary structure comprises 247 residues: MDRSIAKMLSNQQIRNFSRGVGHLRRRAAKNNVIKVRPEELRPFFNQYSVLPNGIQNDADAKLFSKELQPGERKLLFDALRKITADQYNDHKKVVEVTIDHEDLVKVWYINFIPMFVYGCLDEAFLIIGGESINNIFSVYNGMSMLASAAVANIICNLFLQLPADRINDVLGFKKPVLSVDQMNIPEYQYAAFGAKLSGLWMGLTLGMLPLFFIDDNLDNRASDNGDLLVSVANTNGDEYCELFCGD.

The next 3 membrane-spanning stretches (helical) occupy residues 108–128 (WYIN…FLII), 136–156 (IFSV…NIIC), and 194–214 (GAKL…LFFI).

It is found in the membrane. This is an uncharacterized protein from Caenorhabditis elegans.